The sequence spans 141 residues: Hemoglobin subunit alpha-A (141 aa).

The region spanning 1–141 (VLSGSDKTNV…VGNVLTAKYR (141 aa)) is the Globin domain. His58 contacts O2. A heme b-binding site is contributed by His87.

The protein belongs to the globin family. As to quaternary structure, heterotetramer of two alpha chains and two beta chains. Red blood cells.

Its function is as follows. Involved in oxygen transport from the lung to the various peripheral tissues. The chain is Hemoglobin subunit alpha-A (HBAA) from Vultur gryphus (Andean condor).